A 420-amino-acid chain; its full sequence is Ammonium transporter Amt2 (420 aa).

Helical transmembrane passes span 34–54 (VFFL…FAML), 71–91 (NMVD…ILCS), 120–140 (SWFF…GGVA), 149–169 (VLIS…LGPW), 180–200 (AGSL…IAAL), 220–240 (IPMA…FNVG), 250–270 (GLVC…ALIA), 273–293 (NDVL…CSGT), 295–315 (VVSP…VPIV), 339–359 (VIGA…AGGV), and 365–385 (IIGA…LAKI).

Belongs to the ammonia transporter channel (TC 1.A.11.2) family. In terms of assembly, homotrimer. Interacts and forms a complex with GlnK2.

The protein resides in the cell membrane. Its function is as follows. Involved in the uptake of ammonium/ammonia (NH(4)(+)/NH(3)). Transport is electrogenic. The chain is Ammonium transporter Amt2 from Methanocaldococcus jannaschii (strain ATCC 43067 / DSM 2661 / JAL-1 / JCM 10045 / NBRC 100440) (Methanococcus jannaschii).